The primary structure comprises 697 residues: Putative ATP-dependent RNA helicase an3 (697 aa).

The interval 27-189 (ESGVAGTKGR…PLAPNDRVEQ (163 aa)) is disordered. Basic and acidic residues-rich tracts occupy residues 89-111 (GRSD…DKDA), 135-144 (RRTDDRRQDG), and 151-170 (RSDK…WSDD). Residues 221 to 249 (ESFHDVTMGEIIMGNIQLTRYTRPTPVQK) carry the Q motif motif. Residues 241–248 (YTRPTPVQ) and 265–272 (AQTGSGKT) each bind ATP. One can recognise a Helicase ATP-binding domain in the interval 252-444 (IPIIIEKRDL…RDFLDEYIFL (193 aa)). Residues 388-391 (DEAD) carry the DEAD box motif. One can recognise a Helicase C-terminal domain in the interval 455–616 (NITQKVVWVE…EVPSWLENMA (162 aa)). A disordered region spans residues 619-666 (QHHKSSSRGRSKSRFSGGFGAKDYRQSSGAGSSFGSSRGGRSSGHGGS). Residues 622-631 (KSSSRGRSKS) are compositionally biased toward basic residues. The span at 645–654 (SSGAGSSFGS) shows a compositional bias: low complexity. A compositionally biased stretch (gly residues) spans 655–666 (SRGGRSSGHGGS).

This sequence belongs to the DEAD box helicase family. DDX3/DED1 subfamily.

It is found in the cell membrane. The protein localises to the nucleus. The protein resides in the cytoplasm. It localises to the stress granule. Its subcellular location is the inflammasome. It is found in the cell projection. The protein localises to the lamellipodium. The enzyme catalyses ATP + H2O = ADP + phosphate + H(+). Functionally, multifunctional ATP-dependent RNA helicase. The ATPase activity can be stimulated by various ribo-and deoxynucleic acids indicative for a relaxed substrate specificity. In vitro can unwind partially double-stranded DNA with a preference for 5'-single-stranded DNA overhangs. Involved in many cellular processes, which do not necessarily require its ATPase/helicase catalytic activities. Involved in the regulation of transcription and translation initiation. Involved in innate immunity. Involved in both stress and inflammatory responses. May negatively regulate extrinsic apoptotic signaling pathway via death domain receptors. May be involved in mitotic chromosome segregation. Required for canonical Wnt signaling involved in anteroposterior neural patterning. In Xenopus laevis (African clawed frog), this protein is Putative ATP-dependent RNA helicase an3 (an3).